Here is a 453-residue protein sequence, read N- to C-terminus: uncharacterized protein (453 aa).

2 disordered regions span residues 183–210 (GNGR…RSLS) and 428–453 (PDSM…QYSK). Residues 198–207 (TKAHNYKTRR) are compositionally biased toward basic residues. Polar residues predominate over residues 433–453 (HPPTFSKNNTSSNPKSHQYSK).

This is an uncharacterized protein from Saccharomyces cerevisiae (strain ATCC 204508 / S288c) (Baker's yeast).